We begin with the raw amino-acid sequence, 133 residues long: ATP synthase epsilon chain, chloroplastic (133 aa).

Belongs to the ATPase epsilon chain family. In terms of assembly, F-type ATPases have 2 components, CF(1) - the catalytic core - and CF(0) - the membrane proton channel. CF(1) has five subunits: alpha(3), beta(3), gamma(1), delta(1), epsilon(1). CF(0) has three main subunits: a, b and c.

It localises to the plastid. The protein localises to the chloroplast thylakoid membrane. Produces ATP from ADP in the presence of a proton gradient across the membrane. In Psilotum nudum (Whisk fern), this protein is ATP synthase epsilon chain, chloroplastic.